A 590-amino-acid chain; its full sequence is Potassium-transporting ATPase potassium-binding subunit (590 aa).

10 helical membrane passes run 11 to 31 (IFIAAVLLGAKPLGVYMAAVF), 64 to 84 (TAYCASMLIFSAATMLLTYLI), 136 to 156 (GLATHNFWSAAVGIALAIAFI), 178 to 198 (ILWVLLPICVVFALVLTSQGV), 273 to 293 (MLEMISIFLIPAGLTVTLGQM), 301 to 321 (WAVLGAMLILWFAGVATCYWA), 403 to 423 (AGLYGMLVFVIVAVFIAGLMV), 442 to 462 (AMLYLLIFPLIILGFSAVAVL), 511 to 531 (LGFAMFIGRFLMIVPMLALAG), and 552 to 572 (LFTVLLTSVIIVVGALTFLPA).

The protein belongs to the KdpA family. The system is composed of three essential subunits: KdpA, KdpB and KdpC.

It is found in the cell inner membrane. Part of the high-affinity ATP-driven potassium transport (or Kdp) system, which catalyzes the hydrolysis of ATP coupled with the electrogenic transport of potassium into the cytoplasm. This subunit binds the periplasmic potassium ions and delivers the ions to the membrane domain of KdpB through an intramembrane tunnel. This is Potassium-transporting ATPase potassium-binding subunit from Acidobacterium capsulatum (strain ATCC 51196 / DSM 11244 / BCRC 80197 / JCM 7670 / NBRC 15755 / NCIMB 13165 / 161).